A 186-amino-acid polypeptide reads, in one-letter code: Putative manganese efflux pump MntP (186 aa).

The next 6 membrane-spanning stretches (helical) occupy residues 1–21, 41–61, 71–91, 105–125, 130–150, and 165–185; these read MSFL…FAVS, VFFG…GSAV, WIAF…ALYG, LLML…SFAF, ILEP…CGAV, and IIGG…HLLW.

The protein belongs to the MntP (TC 9.B.29) family.

It is found in the cell membrane. Functionally, probably functions as a manganese efflux pump. The sequence is that of Putative manganese efflux pump MntP from Methanosarcina barkeri (strain Fusaro / DSM 804).